The primary structure comprises 246 residues: Ubiquinone biosynthesis O-methyltransferase (246 aa).

Positions 44, 63, 84, and 128 each coordinate S-adenosyl-L-methionine.

Belongs to the methyltransferase superfamily. UbiG/COQ3 family.

The enzyme catalyses a 3-demethylubiquinol + S-adenosyl-L-methionine = a ubiquinol + S-adenosyl-L-homocysteine + H(+). It carries out the reaction a 3-(all-trans-polyprenyl)benzene-1,2-diol + S-adenosyl-L-methionine = a 2-methoxy-6-(all-trans-polyprenyl)phenol + S-adenosyl-L-homocysteine + H(+). It participates in cofactor biosynthesis; ubiquinone biosynthesis. Its function is as follows. O-methyltransferase that catalyzes the 2 O-methylation steps in the ubiquinone biosynthetic pathway. In Xylella fastidiosa (strain 9a5c), this protein is Ubiquinone biosynthesis O-methyltransferase.